A 55-amino-acid polypeptide reads, in one-letter code: Serine protease inhibitor Kazal-type 1 (55 aa).

Residues 2-55 form the Kazal-like domain; that stretch reads QGRDANCNYEFPGCPRNLEPVCGTDGNTYNNECLLCMENKKRDVPIRIQKDGPC. Disulfide bonds link cysteine 8/cysteine 37, cysteine 15/cysteine 34, and cysteine 23/cysteine 55.

It localises to the secreted. In terms of biological role, serine protease inhibitor which exhibits anti-trypsin activity. In the pancreas, protects against trypsin-catalyzed premature activation of zymogens. Functionally, in the male reproductive tract, binds to sperm heads where it modulates sperm capacitance by inhibiting calcium uptake and nitrogen oxide (NO) production. The polypeptide is Serine protease inhibitor Kazal-type 1 (SPINK1) (Monodelphis domestica (Gray short-tailed opossum)).